The chain runs to 235 residues: N-alpha-acetyltransferase 10 (235 aa).

N-acetylmethionine is present on M1. Residues 1–58 (MNIRNARPEDLMNMQHCNLLCLPENYQMKYYFYHGLSWPQLSYIAEDENGKIVGYVLA) are interaction with NAA15. An N-acetyltransferase domain is found at 1–152 (MNIRNARPED…DAYAMKRDLT (152 aa)). N6-acetyllysine; by autocatalysis is present on K136. The segment covering 196 to 213 (EEKGLAAEDSGGDSKDLS) has biased composition (basic and acidic residues). Residues 196–235 (EEKGLAAEDSGGDSKDLSEVSETTESTDVKDSSEASDSAS) are disordered. S205 bears the Phosphoserine mark. Residue S209 is modified to Phosphoserine; by IKKB. Residues S213 and S216 each carry the phosphoserine modification.

This sequence belongs to the acetyltransferase family. ARD1 subfamily. As to quaternary structure, component of the N-terminal acetyltransferase A complex (also called the NatA complex) composed of NAA10 and NAA15. Interacts with NAA15. Component of the N-terminal acetyltransferase A (NatA)/HYPK complex at least composed of NAA10, NAA15 and HYPK, which has N-terminal acetyltransferase activity. In complex with NAA15, interacts with HYPK. Component of the N-terminal acetyltransferase E (NatE) complex at least composed of NAA10, NAA15 and NAA50. Within the complex interacts with NAA15; the interaction is required for binding to NAAT50. Interacts with NAAT50. The interaction of the NatA complex with NAA50 reduces the acetylation activity of the NatA complex. Component of the N-terminal acetyltransferase E (NatE)/HYPK complex at least composed of NAA10, NAA15, NAA50 and HYPK. In complex with NAA15, interacts with HYPK; the interaction with HYPK reduces the capacity of the NatA complex to interact with NAA50. Interacts with HIF1A (via its ODD domain); the interaction increases HIF1A protein stability during normoxia, an down-regulates it when induced by hypoxia. Interacts with the ribosome. Binds to MYLK. Interacts with NAA16. Interacts (via its C-terminal domain) with TSC2, leading to its acetylation. Interacts with IKBKB. Interacts with HSPA1A and HSPA1B leading to its acetylation. In terms of processing, cleaved by caspases during apoptosis. Post-translationally, phosphorylation by IKBKB/IKKB at Ser-209 destabilises NAA10 and promotes its proteasome-mediated degradation. Autoacetylated at Lys-136 which stimulates its catalytic activity. As to expression, ubiquitous.

It localises to the cytoplasm. The protein resides in the nucleus. It carries out the reaction N-terminal glycyl-[protein] + acetyl-CoA = N-terminal N(alpha)-acetylglycyl-[protein] + CoA + H(+). The catalysed reaction is N-terminal L-alanyl-[protein] + acetyl-CoA = N-terminal N(alpha)-acetyl-L-alanyl-[protein] + CoA + H(+). It catalyses the reaction N-terminal L-seryl-[protein] + acetyl-CoA = N-terminal N(alpha)-acetyl-L-seryl-[protein] + CoA + H(+). The enzyme catalyses N-terminal L-valyl-[protein] + acetyl-CoA = N-terminal N(alpha)-acetyl-L-valyl-[protein] + CoA + H(+). It carries out the reaction N-terminal L-cysteinyl-[protein] + acetyl-CoA = N-terminal N(alpha)-acetyl-L-cysteinyl-[protein] + CoA + H(+). The catalysed reaction is N-terminal L-threonyl-[protein] + acetyl-CoA = N-terminal N(alpha)-acetyl-L-threonyl-[protein] + CoA + H(+). Functionally, catalytic subunit of the N-terminal acetyltransferase A (NatA) complex which displays alpha (N-terminal) acetyltransferase activity. Acetylates amino termini that are devoid of initiator methionine. The alpha (N-terminal) acetyltransferase activity may be important for vascular, hematopoietic and neuronal growth and development. Without NAA15, displays epsilon (internal) acetyltransferase activity towards HIF1A, thereby promoting its degradation. Represses MYLK kinase activity by acetylation, and thus represses tumor cell migration. Acetylates, and stabilizes TSC2, thereby repressing mTOR activity and suppressing cancer development. Acetylates HSPA1A and HSPA1B at 'Lys-77' which enhances its chaperone activity and leads to preferential binding to co-chaperone HOPX. Acetylates HIST1H4A. Acts as a negative regulator of sister chromatid cohesion during mitosis. The chain is N-alpha-acetyltransferase 10 (Naa10) from Mus musculus (Mouse).